Here is a 323-residue protein sequence, read N- to C-terminus: Beta-ketoacyl-[acyl-carrier-protein] synthase III (323 aa).

Catalysis depends on residues cysteine 113 and histidine 250. The interval 251 to 255 (QANKR) is ACP-binding. Asparagine 280 is an active-site residue.

The protein belongs to the thiolase-like superfamily. FabH family. As to quaternary structure, homodimer.

It localises to the cytoplasm. The catalysed reaction is malonyl-[ACP] + acetyl-CoA + H(+) = 3-oxobutanoyl-[ACP] + CO2 + CoA. It functions in the pathway lipid metabolism; fatty acid biosynthesis. Catalyzes the condensation reaction of fatty acid synthesis by the addition to an acyl acceptor of two carbons from malonyl-ACP. Catalyzes the first condensation reaction which initiates fatty acid synthesis and may therefore play a role in governing the total rate of fatty acid production. Possesses both acetoacetyl-ACP synthase and acetyl transacylase activities. Its substrate specificity determines the biosynthesis of branched-chain and/or straight-chain of fatty acids. The chain is Beta-ketoacyl-[acyl-carrier-protein] synthase III from Mesorhizobium japonicum (strain LMG 29417 / CECT 9101 / MAFF 303099) (Mesorhizobium loti (strain MAFF 303099)).